Here is a 95-residue protein sequence, read N- to C-terminus: Protein YY1 (95 aa).

Residues 1–26 form the signal peptide; sequence MAVTRTALLVVLVAGAMTMTMRGAEA. 4 cysteine pairs are disulfide-bonded: Cys-31–Cys-72, Cys-41–Cys-61, Cys-62–Cys-87, and Cys-74–Cys-94.

This sequence belongs to the A9/FIL1 family. Anther.

It localises to the secreted. In Oryza sativa subsp. japonica (Rice), this protein is Protein YY1.